A 401-amino-acid chain; its full sequence is Argininosuccinate synthase (401 aa).

Residue 9–17 (AYSGGLDTS) participates in ATP binding. Residue Tyr-88 participates in L-citrulline binding. Residue Gly-118 coordinates ATP. L-aspartate-binding residues include Thr-120, Asn-124, and Asp-125. Residue Asn-124 coordinates L-citrulline. Residues Arg-128, Ser-176, Ser-185, Glu-261, and Tyr-273 each coordinate L-citrulline.

The protein belongs to the argininosuccinate synthase family. Type 1 subfamily. Homotetramer.

It localises to the cytoplasm. The catalysed reaction is L-citrulline + L-aspartate + ATP = 2-(N(omega)-L-arginino)succinate + AMP + diphosphate + H(+). It functions in the pathway amino-acid biosynthesis; L-arginine biosynthesis; L-arginine from L-ornithine and carbamoyl phosphate: step 2/3. This chain is Argininosuccinate synthase, found in Symbiobacterium thermophilum (strain DSM 24528 / JCM 14929 / IAM 14863 / T).